Here is a 113-residue protein sequence, read N- to C-terminus: Iron-sulfur cluster insertion protein ErpA (113 aa).

C41, C105, and C107 together coordinate iron-sulfur cluster.

Belongs to the HesB/IscA family. As to quaternary structure, homodimer. Requires iron-sulfur cluster as cofactor.

Its function is as follows. Required for insertion of 4Fe-4S clusters for at least IspG. The protein is Iron-sulfur cluster insertion protein ErpA of Actinobacillus pleuropneumoniae serotype 5b (strain L20).